Consider the following 84-residue polypeptide: Cytochrome b559 subunit alpha (84 aa).

The chain crosses the membrane as a helical span at residues 24 to 38 (IIHAVTLPAIFIAGF). Heme is bound at residue H26.

This sequence belongs to the PsbE/PsbF family. Heterodimer of an alpha subunit and a beta subunit. PSII is composed of 1 copy each of membrane proteins PsbA, PsbB, PsbC, PsbD, PsbE, PsbF, PsbH, PsbI, PsbJ, PsbK, PsbL, PsbM, PsbT, PsbX, PsbY, Psb30/Ycf12, peripheral proteins PsbO, CyanoQ (PsbQ), PsbU, PsbV and a large number of cofactors. It forms dimeric complexes. The cofactor is heme b.

It localises to the cellular thylakoid membrane. Functionally, this b-type cytochrome is tightly associated with the reaction center of photosystem II (PSII). PSII is a light-driven water:plastoquinone oxidoreductase that uses light energy to abstract electrons from H(2)O, generating O(2) and a proton gradient subsequently used for ATP formation. It consists of a core antenna complex that captures photons, and an electron transfer chain that converts photonic excitation into a charge separation. This Prochlorococcus marinus (strain MIT 9301) protein is Cytochrome b559 subunit alpha.